A 122-amino-acid chain; its full sequence is Large ribosomal subunit protein uL14 (122 aa).

The protein belongs to the universal ribosomal protein uL14 family. Part of the 50S ribosomal subunit. Forms a cluster with proteins L3 and L19. In the 70S ribosome, L14 and L19 interact and together make contacts with the 16S rRNA in bridges B5 and B8.

In terms of biological role, binds to 23S rRNA. Forms part of two intersubunit bridges in the 70S ribosome. The polypeptide is Large ribosomal subunit protein uL14 (Colwellia psychrerythraea (strain 34H / ATCC BAA-681) (Vibrio psychroerythus)).